A 143-amino-acid polypeptide reads, in one-letter code: 3-hydroxyacyl-[acyl-carrier-protein] dehydratase FabZ (143 aa).

Residue H49 is part of the active site.

It belongs to the thioester dehydratase family. FabZ subfamily.

It is found in the cytoplasm. It catalyses the reaction a (3R)-hydroxyacyl-[ACP] = a (2E)-enoyl-[ACP] + H2O. Functionally, involved in unsaturated fatty acids biosynthesis. Catalyzes the dehydration of short chain beta-hydroxyacyl-ACPs and long chain saturated and unsaturated beta-hydroxyacyl-ACPs. In Wolbachia pipientis subsp. Culex pipiens (strain wPip), this protein is 3-hydroxyacyl-[acyl-carrier-protein] dehydratase FabZ.